The primary structure comprises 236 residues: Biosynthetic peptidoglycan transglycosylase (236 aa).

Residues 12 to 31 form a helical membrane-spanning segment; the sequence is ALLWFAAGSIAVVLVLRWVP.

Belongs to the glycosyltransferase 51 family.

The protein localises to the cell inner membrane. The enzyme catalyses [GlcNAc-(1-&gt;4)-Mur2Ac(oyl-L-Ala-gamma-D-Glu-L-Lys-D-Ala-D-Ala)](n)-di-trans,octa-cis-undecaprenyl diphosphate + beta-D-GlcNAc-(1-&gt;4)-Mur2Ac(oyl-L-Ala-gamma-D-Glu-L-Lys-D-Ala-D-Ala)-di-trans,octa-cis-undecaprenyl diphosphate = [GlcNAc-(1-&gt;4)-Mur2Ac(oyl-L-Ala-gamma-D-Glu-L-Lys-D-Ala-D-Ala)](n+1)-di-trans,octa-cis-undecaprenyl diphosphate + di-trans,octa-cis-undecaprenyl diphosphate + H(+). It participates in cell wall biogenesis; peptidoglycan biosynthesis. Its function is as follows. Peptidoglycan polymerase that catalyzes glycan chain elongation from lipid-linked precursors. In Pseudomonas entomophila (strain L48), this protein is Biosynthetic peptidoglycan transglycosylase.